The primary structure comprises 101 residues: LGKFSQTCYNSAIQGSVLTSTCERTNGGYNTSSIDLNSVIENVDGSLKWQPSNFIETCRNTQLAGSSELAAECKTRAQQFVSTKINLDDHIANIDGTLKYE.

2 cysteine pairs are disulfide-bonded: C8–C22 and C58–C73.

This sequence belongs to the cyanovirin-N family. As to quaternary structure, in solution exists as a metastable domain-swapped homodimer which very slowly converts into a more stable monomeric form at room temperature. Under physiological conditions it is unlikely that the dimeric species exists and indeed the monomer is more active against HIV. Interacts with HIV-1 gp120. Cleavage, or reduction and alkylation of the disulfide bonds results in the loss of anti-HIV activity.

Mannose-binding lectin. This is Cyanovirin-N from Nostoc ellipsosporum.